The primary structure comprises 201 residues: Large ribosomal subunit protein uL4 (201 aa).

Residues 44 to 71 form a disordered region; sequence RAQKTRAEVTGSGKKPWRQKGTGRARSG.

It belongs to the universal ribosomal protein uL4 family. As to quaternary structure, part of the 50S ribosomal subunit.

One of the primary rRNA binding proteins, this protein initially binds near the 5'-end of the 23S rRNA. It is important during the early stages of 50S assembly. It makes multiple contacts with different domains of the 23S rRNA in the assembled 50S subunit and ribosome. Functionally, forms part of the polypeptide exit tunnel. The sequence is that of Large ribosomal subunit protein uL4 from Edwardsiella ictaluri (strain 93-146).